Here is a 287-residue protein sequence, read N- to C-terminus: Acetylglutamate kinase (287 aa).

Residues 70 to 71, Arg92, and Asn184 contribute to the substrate site; that span reads GG.

Belongs to the acetylglutamate kinase family. ArgB subfamily.

It localises to the cytoplasm. The catalysed reaction is N-acetyl-L-glutamate + ATP = N-acetyl-L-glutamyl 5-phosphate + ADP. It participates in amino-acid biosynthesis; L-arginine biosynthesis; N(2)-acetyl-L-ornithine from L-glutamate: step 2/4. Catalyzes the ATP-dependent phosphorylation of N-acetyl-L-glutamate. In Roseobacter denitrificans (strain ATCC 33942 / OCh 114) (Erythrobacter sp. (strain OCh 114)), this protein is Acetylglutamate kinase.